A 230-amino-acid chain; its full sequence is 3-isopropylmalate dehydratase small subunit (230 aa).

This sequence belongs to the LeuD family. LeuD type 1 subfamily. In terms of assembly, heterodimer of LeuC and LeuD.

It catalyses the reaction (2R,3S)-3-isopropylmalate = (2S)-2-isopropylmalate. It participates in amino-acid biosynthesis; L-leucine biosynthesis; L-leucine from 3-methyl-2-oxobutanoate: step 2/4. Catalyzes the isomerization between 2-isopropylmalate and 3-isopropylmalate, via the formation of 2-isopropylmaleate. The sequence is that of 3-isopropylmalate dehydratase small subunit from Bifidobacterium longum (strain DJO10A).